We begin with the raw amino-acid sequence, 463 residues long: Stress-activated protein kinase jnk-1 (463 aa).

Polar residues predominate over residues 1–12; the sequence is MEERLSTTSSYP. Residues 1–23 are disordered; it reads MEERLSTTSSYPSHPGRSVEEDH. Positions 119 to 412 constitute a Protein kinase domain; the sequence is YQNLRLIGSG…ISVDDALRHP (294 aa). Residues 126 to 131 and K148 contribute to the ATP site; that span reads GSGAQG. The Proton acceptor role is filled by D244. Phosphothreonine is present on T276. Residues 276–278 carry the TXY motif; sequence TPY. A Phosphotyrosine modification is found at Y278.

It belongs to the protein kinase superfamily. CMGC Ser/Thr protein kinase family. MAP kinase subfamily. In terms of assembly, binds to the scaffolding protein, unc-16. Unc-16 also binds other components of the JNK signaling pathway. Interacts with daf-16. The cofactor is Mg(2+). Post-translationally, dually phosphorylated on Thr-276 and Tyr-278, which activates the enzyme. Expressed in most neurons, including nerve ring, head ganglions, dorsal and ventral nerve cords and tail ganglions. The Thr-276/Tyr-278 phosphorylated form is present in the nerve ring upon heat exposure.

Its subcellular location is the cytoplasm. The protein localises to the perikaryon. It localises to the cell projection. The protein resides in the axon. It carries out the reaction L-seryl-[protein] + ATP = O-phospho-L-seryl-[protein] + ADP + H(+). The catalysed reaction is L-threonyl-[protein] + ATP = O-phospho-L-threonyl-[protein] + ADP + H(+). Its activity is regulated as follows. Activated by threonine and tyrosine phosphorylation by either of the dual specificity kinases, jkk-1 and mek-1. Serine/threonine-protein kinase which responds to activation by environmental stress by phosphorylating a number of transcription factors such as daf-16, and thus regulates transcriptional activity. By phosphorylating daf-16, plays a role in daf-16 nuclear translocation in intestinal cells in response to environmental stresses such as heat and oxidative stresses. Downstream of jkk-1, may coordinate locomotion via type-D GABAergic motoneurons and regulates synaptic vesicle transport in conjunction with unc-16. Independently of jkk-1, may regulate some mechanosensory responses, such as response to touch. Independently of jkk-1 and downstream of mek-1, plays a role in resistance to heavy metals, such as Cu(2+) or Cd(2+). Regulates germline cell apoptosis in response to heavy metals such as Cu(2+) and arsenite. Required for dopaminergic CEP neuron degeneration in response to Mn(2+). Required for normal sleep bout quantity and arousal thresholds during the transition from the last larval stage to adulthood in well-fed animals. Downstream of jkk-1 but independently of mek-1, positively regulates lifespan. This chain is Stress-activated protein kinase jnk-1 (jnk-1), found in Caenorhabditis elegans.